Consider the following 252-residue polypeptide: MKTVTVKDLVIGTGAPKIIVSLMAKDIASVKSEALAYREADFDILEWRVDHYADLSNVESVMAAAKILRETMPEKPLLFTFRSAKEGGEQAISTEAYIALNRAAIDSGLVDMIDLELFTGDDQVKETVAYAHAHDVKVVMSNHDFHKTPEAEEIIARLRKMQSFDADIPKIALMPQSTSDVLTLLAATLEMQEQYADRPIITMSMAKTGVISRLAGEVFGSAATFGAVKKASAPGQISVNDLRTVLTILHQA.

Residues Ser21, 46–48 (EWR), and Arg82 each bind 3-dehydroquinate. The Proton donor/acceptor role is filled by His143. The active-site Schiff-base intermediate with substrate is the Lys170. Positions 213, 232, and 236 each coordinate 3-dehydroquinate.

This sequence belongs to the type-I 3-dehydroquinase family. In terms of assembly, homodimer.

It catalyses the reaction 3-dehydroquinate = 3-dehydroshikimate + H2O. It functions in the pathway metabolic intermediate biosynthesis; chorismate biosynthesis; chorismate from D-erythrose 4-phosphate and phosphoenolpyruvate: step 3/7. Involved in the third step of the chorismate pathway, which leads to the biosynthesis of aromatic amino acids. Catalyzes the cis-dehydration of 3-dehydroquinate (DHQ) and introduces the first double bond of the aromatic ring to yield 3-dehydroshikimate. This is 3-dehydroquinate dehydratase from Escherichia coli (strain K12 / MC4100 / BW2952).